A 41-amino-acid polypeptide reads, in one-letter code: Alpha-conotoxin-like Pu1.2 (41 aa).

Positions 1–21 (LDGRNAAADFETSDLLAMTIR) are excised as a propeptide. 2 cysteine pairs are disulfide-bonded: Cys-24/Cys-30 and Cys-25/Cys-37. Cys-37 carries the post-translational modification Cysteine amide. Residues 38–41 (GGKR) constitute a propeptide that is removed on maturation.

The protein belongs to the conotoxin A superfamily. Post-translationally, non-native isomers 'ribbon' (with disulfide connectivity C1-C4, C2-C3) and 'beads' (with disulfide connectivity C1-C2, C3-C4) also inhibit high voltage-activated (HVA) calcium channel currents in rat DRG neurons (25-30% inhibition at 1 uM toxin). Mutants Pu1.2(9-16), [C3S; C9S]Pu1.2 and [C4S]Pu1.2(1-9) are all C-terminally amidated. As to expression, expressed by the venom duct.

The protein resides in the secreted. Its function is as follows. Alpha-conotoxins act on postsynaptic membranes, they bind to the nicotinic acetylcholine receptors (nAChR) and thus inhibit them. This toxin also inhibits high voltage-activated (HVA) calcium channel currents in rat DRG neurons (27% inhibition at 1 uM toxin) probably by activating GABA(B) receptors (GABBR1 and/or GABBR2). In Conus pulicarius (Flea-bitten cone), this protein is Alpha-conotoxin-like Pu1.2.